A 145-amino-acid chain; its full sequence is Putative pre-16S rRNA nuclease (145 aa).

This sequence belongs to the YqgF nuclease family.

It is found in the cytoplasm. Could be a nuclease involved in processing of the 5'-end of pre-16S rRNA. The chain is Putative pre-16S rRNA nuclease from Pseudomonas fluorescens (strain Pf0-1).